A 595-amino-acid polypeptide reads, in one-letter code: Probable inactive glycosyltransferase 25 family member 3 (595 aa).

An N-terminal signal peptide occupies residues 1 to 24; it reads MRAAPAAPLLQLLLLLGPRPEAAG. N-linked (GlcNAc...) asparagine glycosylation is found at asparagine 75, asparagine 153, asparagine 237, and asparagine 360. A disordered region spans residues 576–595; it reads RLDLAGGSGHSLRPHPRDEL. Positions 592–595 match the Prevents secretion from ER motif; it reads RDEL.

Belongs to the glycosyltransferase 25 family.

The protein localises to the endoplasmic reticulum lumen. Probable cell adhesion protein involved in leukocyte transmigration across the blood-brain barrier. Does not express any beta-galactosyltransferase activity in vitro. In Bos taurus (Bovine), this protein is Probable inactive glycosyltransferase 25 family member 3 (CERCAM).